A 488-amino-acid chain; its full sequence is 3-octaprenyl-4-hydroxybenzoate carboxy-lyase (488 aa).

Position 172 (asparagine 172) interacts with Mn(2+). Prenylated FMN-binding positions include 175–177 (IYR), 189–191 (RWL), and 194–195 (RG). Glutamate 238 provides a ligand contact to Mn(2+). Residue aspartate 287 is the Proton donor of the active site.

It belongs to the UbiD family. Homohexamer. Prenylated FMN is required as a cofactor. Mn(2+) serves as cofactor.

Its subcellular location is the cell membrane. It carries out the reaction a 4-hydroxy-3-(all-trans-polyprenyl)benzoate + H(+) = a 2-(all-trans-polyprenyl)phenol + CO2. It participates in cofactor biosynthesis; ubiquinone biosynthesis. Its function is as follows. Catalyzes the decarboxylation of 3-octaprenyl-4-hydroxy benzoate to 2-octaprenylphenol, an intermediate step in ubiquinone biosynthesis. This chain is 3-octaprenyl-4-hydroxybenzoate carboxy-lyase, found in Shewanella oneidensis (strain ATCC 700550 / JCM 31522 / CIP 106686 / LMG 19005 / NCIMB 14063 / MR-1).